A 96-amino-acid chain; its full sequence is Integration host factor subunit beta (96 aa).

It belongs to the bacterial histone-like protein family. In terms of assembly, heterodimer of an alpha and a beta chain.

Its function is as follows. This protein is one of the two subunits of integration host factor, a specific DNA-binding protein that functions in genetic recombination as well as in transcriptional and translational control. This Dichelobacter nodosus (strain VCS1703A) protein is Integration host factor subunit beta.